Consider the following 229-residue polypeptide: Small ribosomal subunit protein uS2c (229 aa).

The protein belongs to the universal ribosomal protein uS2 family.

The protein localises to the plastid. It localises to the chloroplast. The polypeptide is Small ribosomal subunit protein uS2c (rps2) (Trieres chinensis (Marine centric diatom)).